A 227-amino-acid chain; its full sequence is Cytochrome c oxidase subunit 2 (227 aa).

At Met-1–Ser-14 the chain is on the mitochondrial intermembrane side. The chain crosses the membrane as a helical span at residues Pro-15–Met-45. Residues Leu-46–Gln-59 are Mitochondrial matrix-facing. Residues Glu-60–Met-87 traverse the membrane as a helical segment. The Mitochondrial intermembrane portion of the chain corresponds to Asp-88–Leu-227. Residues His-161, Cys-196, Glu-198, Cys-200, His-204, and Met-207 each contribute to the Cu cation site. Residue Glu-198 coordinates Mg(2+).

Belongs to the cytochrome c oxidase subunit 2 family. As to quaternary structure, component of the cytochrome c oxidase (complex IV, CIV), a multisubunit enzyme composed of 14 subunits. The complex is composed of a catalytic core of 3 subunits MT-CO1, MT-CO2 and MT-CO3, encoded in the mitochondrial DNA, and 11 supernumerary subunits COX4I, COX5A, COX5B, COX6A, COX6B, COX6C, COX7A, COX7B, COX7C, COX8 and NDUFA4, which are encoded in the nuclear genome. The complex exists as a monomer or a dimer and forms supercomplexes (SCs) in the inner mitochondrial membrane with NADH-ubiquinone oxidoreductase (complex I, CI) and ubiquinol-cytochrome c oxidoreductase (cytochrome b-c1 complex, complex III, CIII), resulting in different assemblies (supercomplex SCI(1)III(2)IV(1) and megacomplex MCI(2)III(2)IV(2)). Found in a complex with TMEM177, COA6, COX18, COX20, SCO1 and SCO2. Interacts with TMEM177 in a COX20-dependent manner. Interacts with COX20. Interacts with COX16. It depends on Cu cation as a cofactor.

It localises to the mitochondrion inner membrane. The catalysed reaction is 4 Fe(II)-[cytochrome c] + O2 + 8 H(+)(in) = 4 Fe(III)-[cytochrome c] + 2 H2O + 4 H(+)(out). Its function is as follows. Component of the cytochrome c oxidase, the last enzyme in the mitochondrial electron transport chain which drives oxidative phosphorylation. The respiratory chain contains 3 multisubunit complexes succinate dehydrogenase (complex II, CII), ubiquinol-cytochrome c oxidoreductase (cytochrome b-c1 complex, complex III, CIII) and cytochrome c oxidase (complex IV, CIV), that cooperate to transfer electrons derived from NADH and succinate to molecular oxygen, creating an electrochemical gradient over the inner membrane that drives transmembrane transport and the ATP synthase. Cytochrome c oxidase is the component of the respiratory chain that catalyzes the reduction of oxygen to water. Electrons originating from reduced cytochrome c in the intermembrane space (IMS) are transferred via the dinuclear copper A center (CU(A)) of subunit 2 and heme A of subunit 1 to the active site in subunit 1, a binuclear center (BNC) formed by heme A3 and copper B (CU(B)). The BNC reduces molecular oxygen to 2 water molecules using 4 electrons from cytochrome c in the IMS and 4 protons from the mitochondrial matrix. This is Cytochrome c oxidase subunit 2 (MT-CO2) from Cavia aperea (Brazilian guinea pig).